The following is a 628-amino-acid chain: Junctophilin-4 (628 aa).

Over 1–606 (MSPGGKFDFD…RPAQPGAANP (606 aa)) the chain is Cytoplasmic. MORN repeat units lie at residues 50–72 (LGVF…KREG), 74–95 (GVER…KGRS), 96–117 (GVWE…FQDG), 118–140 (YGTE…KRHG), 141–163 (YGVR…RTSL), and 164–186 (DSGH…EGGS). 2 disordered regions span residues 158-214 (PRRT…RTPA) and 231-276 (GGRR…LIEG). Over residues 170-179 (PPTPPPPLPL) the composition is skewed to pro residues. 2 stretches are compositionally biased toward low complexity: residues 231-241 (GGRRSSLGSKR) and 253-272 (GSTG…APPA). MORN repeat units follow at residues 317-339 (YGRT…RLVH) and 340-362 (GGRV…KVDR). The interval 415–602 (DLQPMLEAPG…AATERPAQPG (188 aa)) is disordered. The segment covering 432 to 443 (EGSDTEPLDEDS) has biased composition (acidic residues). Composition is skewed to low complexity over residues 453–467 (PSEG…PASS) and 528–541 (GSPL…SSGS). A helical; Anchor for type IV membrane protein membrane pass occupies residues 607 to 628 (LVVGAVALLDLSLAFLFSQLLT).

This sequence belongs to the junctophilin family.

Its subcellular location is the cell membrane. The protein localises to the endoplasmic reticulum membrane. Junctophilins contribute to the formation of junctional membrane complexes (JMCs) which link the plasma membrane with the endoplasmic or sarcoplasmic reticulum in excitable cells. Provides a structural foundation for functional cross-talk between the cell surface and intracellular calcium release channels. JPH4 is brain-specific and appears to have an active role in certain neurons involved in motor coordination and memory. This is Junctophilin-4 (JPH4) from Homo sapiens (Human).